Here is a 187-residue protein sequence, read N- to C-terminus: dTTP/UTP pyrophosphatase (187 aa).

Residue aspartate 65 is the Proton acceptor of the active site.

Belongs to the Maf family. YhdE subfamily. Requires a divalent metal cation as cofactor.

It localises to the cytoplasm. The enzyme catalyses dTTP + H2O = dTMP + diphosphate + H(+). The catalysed reaction is UTP + H2O = UMP + diphosphate + H(+). Nucleoside triphosphate pyrophosphatase that hydrolyzes dTTP and UTP. May have a dual role in cell division arrest and in preventing the incorporation of modified nucleotides into cellular nucleic acids. This chain is dTTP/UTP pyrophosphatase, found in Pyrococcus abyssi (strain GE5 / Orsay).